The sequence spans 342 residues: GTPase Obg (342 aa).

Residues 1 to 159 form the Obg domain; that stretch reads MQFIDQAKIE…KQLRLELKLL (159 aa). The OBG-type G domain maps to 160–330; sequence AEVGIIGLPN…MLQEIWGILD (171 aa). Residues 166 to 173, 191 to 195, 213 to 216, 280 to 283, and 311 to 313 contribute to the GTP site; these read GLPNAGKS, FTTLI, DIPG, NKID, and SAV. Positions 173 and 193 each coordinate Mg(2+).

Belongs to the TRAFAC class OBG-HflX-like GTPase superfamily. OBG GTPase family. In terms of assembly, monomer. The cofactor is Mg(2+).

The protein localises to the cytoplasm. Functionally, an essential GTPase which binds GTP, GDP and possibly (p)ppGpp with moderate affinity, with high nucleotide exchange rates and a fairly low GTP hydrolysis rate. Plays a role in control of the cell cycle, stress response, ribosome biogenesis and in those bacteria that undergo differentiation, in morphogenesis control. This Nostoc punctiforme (strain ATCC 29133 / PCC 73102) protein is GTPase Obg.